A 293-amino-acid polypeptide reads, in one-letter code: Ribonuclease P/MRP protein subunit RPP1 (293 aa).

The protein belongs to the eukaryotic/archaeal RNase P protein component 3 family. As to quaternary structure, component of nuclear RNase P and RNase MRP complexes. RNase P consists of an RNA moiety and at least 9 protein subunits including POP1, POP3, POP4, POP5, POP6, POP7, POP8, RPP1 and RPR2. RNase MRP complex consists of an RNA moiety and at least 10 protein subunits including POP1, POP3, POP4, POP5, POP6, POP7, POP8, RMP1, RPP1 and SNM1, many of which are shared with the RNase P complex.

Its subcellular location is the nucleus. The catalysed reaction is Endonucleolytic cleavage of RNA, removing 5'-extranucleotides from tRNA precursor.. Component of ribonuclease P, a protein complex that generates mature tRNA molecules by cleaving their 5'-ends. Also a component of RNase MRP, which cleaves pre-rRNA sequences. The chain is Ribonuclease P/MRP protein subunit RPP1 (RPP1) from Saccharomyces cerevisiae (strain ATCC 204508 / S288c) (Baker's yeast).